We begin with the raw amino-acid sequence, 119 residues long: Single-stranded DNA-binding protein (119 aa).

The region spanning 3–102 is the SSB domain; the sequence is INIVTLVGRV…IRVDQLELLG (100 aa).

As to quaternary structure, homotetramer.

The chain is Single-stranded DNA-binding protein (ssb1) from Anabaena variabilis.